Reading from the N-terminus, the 691-residue chain is Calcium-binding and coiled-coil domain-containing protein 1 (691 aa).

The segment at 1-30 is p300 KIX-binding; the sequence is MEESPLSRAPSRGGVNFLNVARTYIPNTKV. The N-terminal AD (CTNNB1 binding site) stretch occupies residues 1–190; it reads MEESPLSRAP…VQELERALAT (190 aa). Phosphoserine is present on S4. Positions 45 to 125 are interaction with GATA1; the sequence is SDWIGIFKVE…FQFREPRPMD (81 aa). 3 coiled-coil regions span residues 145 to 205, 232 to 339, and 417 to 514; these read KATV…YKGI, ELED…AELE, and QSVE…ADEK. The C-terminal AD (CTNNB1 binding site); interaction with CCAR1 stretch occupies residues 501-691; the sequence is RKLEARLEKV…FSTQDPFTFE (191 aa). The tract at residues 514 to 606 is disordered; sequence KWNEDATTED…SEAEDEKSVL (93 aa). Residues 653–679 form a UBZ1-type zinc finger; that stretch reads WKECPICKERFPAESDKDALEDHMDGH. Residues C656, C659, H675, and H679 each coordinate Zn(2+).

The protein belongs to the CALCOCO family. In terms of assembly, part of a calphoglin complex consisting of CALCOCO1, PPA1 and PGM. Interacts with the bHLH-PAS domains of GRIP1, AHR and ARNT. Interacts with CTNNB1 via both its N- and C-terminal regions. Interacts with EP300. Interacts with CCAR1 (via N-terminus) and GATA1.

It localises to the cytoplasm. It is found in the nucleus. Its function is as follows. Functions as a coactivator for aryl hydrocarbon and nuclear receptors (NR). Recruited to promoters through its contact with the N-terminal basic helix-loop-helix-Per-Arnt-Sim (PAS) domain of transcription factors or coactivators, such as NCOA2. During ER-activation acts synergistically in combination with other NCOA2-binding proteins, such as EP300, CREBBP and CARM1. Involved in the transcriptional activation of target genes in the Wnt/CTNNB1 pathway. Functions as a secondary coactivator in LEF1-mediated transcriptional activation via its interaction with CTNNB1. Coactivator function for nuclear receptors and LEF1/CTNNB1 involves differential utilization of two different activation regions. In association with CCAR1 enhances GATA1- and MED1-mediated transcriptional activation from the gamma-globin promoter during erythroid differentiation of K562 erythroleukemia cells. Seems to enhance inorganic pyrophosphatase thus activating phosphogluomutase (PMG). Probably functions as a component of the calphoglin complex, which is involved in linking cellular metabolism (phosphate and glucose metabolism) with other core functions including protein synthesis and degradation, calcium signaling and cell growth. This Homo sapiens (Human) protein is Calcium-binding and coiled-coil domain-containing protein 1 (CALCOCO1).